The sequence spans 155 residues: Nodulin-related protein 2 (155 aa).

An N-acetylmethionine modification is found at M1. 2 disordered regions span residues 1 to 37 (MNFI…PATN) and 85 to 155 (DEKS…GFLK). Residues 95-106 (DKAEKYLNDYES) show a composition bias toward basic and acidic residues. A compositionally biased stretch (low complexity) spans 120–130 (SQAEPASQPEP).

In terms of assembly, interacts with DEK3.

Functionally, may be a negative regulator of the ABA signaling/synthesis pathway. In Arabidopsis thaliana (Mouse-ear cress), this protein is Nodulin-related protein 2.